Here is a 314-residue protein sequence, read N- to C-terminus: Taste receptor type 2 member 42 (314 aa).

Over 1 to 7 (MATEMDK) the chain is Extracellular. A helical transmembrane segment spans residues 8–28 (IFLTLATVEFIIGMLGNVFIG). The Cytoplasmic segment spans residues 29 to 50 (LVNCSEGIKNQKVFSVDFILTC). A helical transmembrane segment spans residues 51–71 (LAISTIGHLLVILFDSCVVGL). Topologically, residues 72 to 101 (APHLYATDRVRRPVTMLWHMXNHLTTWLAT) are extracellular. The helical transmembrane segment at 102–122 (CLSIFYFFKIAHFPHSLFLWL) threads the bilayer. The Cytoplasmic segment spans residues 123-127 (RWRMN). The helical transmembrane segment at 128-148 (RVIAILLTLSLFLLIFDCLVL) threads the bilayer. Residues 149 to 187 (EMFIDXSLNIIDKSNLTLYLDESKTPYDKLSLLKILLSL) are Extracellular-facing. A glycan (N-linked (GlcNAc...) asparagine) is linked at asparagine 163. The helical transmembrane segment at 188-208 (NSFIPFSLCLTSLLFLFLSLV) threads the bilayer. At 209-238 (RHTRNLKLSSLGSRDSSTEAHRRAMKMVMS) the chain is on the cytoplasmic side. The helical transmembrane segment at 239-259 (LLFLFIVHFFSLQVANWTFCI) threads the bilayer. Residues 260–265 (LGNNKY) are Extracellular-facing. The helical transmembrane segment at 266–286 (TQFVTLALHAFPSCHSFILIL) threads the bilayer. Residues 287–314 (GNSKLRQTAVRLLWHLRNYTKRPNPLPL) are Cytoplasmic-facing.

It belongs to the G-protein coupled receptor T2R family.

The protein resides in the membrane. Receptor that may play a role in the perception of bitterness and is gustducin-linked. May play a role in sensing the chemical composition of the gastrointestinal content. The activity of this receptor may stimulate alpha gustducin, mediate PLC-beta-2 activation and lead to the gating of TRPM5. The sequence is that of Taste receptor type 2 member 42 (TAS2R42) from Macaca mulatta (Rhesus macaque).